Here is a 3135-residue protein sequence, read N- to C-terminus: Beauvericin nonribosomal cyclodepsipeptide synthetase BEA1 (3135 aa).

Residues His-70–Leu-458 form a condensation 1 region. A disordered region spans residues Leu-196–Gly-228. Residues Ser-499–Arg-896 are adenylation 1. The region spanning Ser-1021–Ala-1097 is the Carrier 1 domain. Ser-1058 is subject to O-(pantetheine 4'-phosphoryl)serine. A condensation 2 region spans residues Ser-1115–Thr-1542. The adenylation 2 stretch occupies residues Phe-1571 to Arg-1974. The interval Met-2042–Val-2182 is S-adenosyl-L-methionine-dependent N-methyltransferase. Carrier domains are found at residues Val-2509–Leu-2583 and Ala-2603–Asp-2677. O-(pantetheine 4'-phosphoryl)serine is present on residues Ser-2543 and Ser-2637. The tract at residues Gln-2721–Thr-3127 is condensation 3.

Belongs to the NRP synthetase family.

The enzyme catalyses 3 (R)-2-hydroxy-3-methylbutanoate + 3 L-phenylalanine + 3 S-adenosyl-L-methionine + 6 ATP = beauvericin + 6 AMP + 3 S-adenosyl-L-homocysteine + 6 diphosphate + 6 H(+). In terms of biological role, beauvericin nonribosomal cyclodepsipeptide synthetase; part of the gene cluster that mediates the biosynthesis of beauvericin (BEA), a non-ribosomal cyclic hexadepsipeptide that shows antibiotic, antifungal, insecticidal, and cancer cell antiproliferative and antihaptotactic activity. Ketoisovalerate reductase BEA2 catalyzes the NADPH-specific reduction of ketoisovaleric acid to hydroxyisovalerate, a precursor for beauvericin biosynthesis. The nonribosomal cyclodepsipeptide synthetase BEA1 then catalyzes the formation of beauvericin via condensation and cyclization of 3 dipeptidol monomers, each composed of one unit of hydroxyisovalerate and one unit of N-methyl-phenylalanine. The chain is Beauvericin nonribosomal cyclodepsipeptide synthetase BEA1 from Gibberella fujikuroi (strain CBS 195.34 / IMI 58289 / NRRL A-6831) (Bakanae and foot rot disease fungus).